We begin with the raw amino-acid sequence, 413 residues long: Tyrosine--tRNA ligase (413 aa).

The 'HIGH' region motif lies at 59 to 68 (PTAPDIHLGH). Residues 243 to 247 (KMSKS) carry the 'KMSKS' region motif. Residue Lys-246 participates in ATP binding. Residues 351 to 411 (LAIGQLLKQA…GKRRFARVTL (61 aa)) form the S4 RNA-binding domain.

The protein belongs to the class-I aminoacyl-tRNA synthetase family. TyrS type 2 subfamily. Homodimer.

Its subcellular location is the cytoplasm. It catalyses the reaction tRNA(Tyr) + L-tyrosine + ATP = L-tyrosyl-tRNA(Tyr) + AMP + diphosphate + H(+). Functionally, catalyzes the attachment of tyrosine to tRNA(Tyr) in a two-step reaction: tyrosine is first activated by ATP to form Tyr-AMP and then transferred to the acceptor end of tRNA(Tyr). The polypeptide is Tyrosine--tRNA ligase (Burkholderia pseudomallei (strain 1710b)).